A 295-amino-acid chain; its full sequence is 4-hydroxy-tetrahydrodipicolinate synthase (295 aa).

Threonine 46 contributes to the pyruvate binding site. The active-site Proton donor/acceptor is the tyrosine 134. The active-site Schiff-base intermediate with substrate is lysine 162. Valine 204 is a binding site for pyruvate.

It belongs to the DapA family. As to quaternary structure, homotetramer; dimer of dimers.

Its subcellular location is the cytoplasm. The enzyme catalyses L-aspartate 4-semialdehyde + pyruvate = (2S,4S)-4-hydroxy-2,3,4,5-tetrahydrodipicolinate + H2O + H(+). The protein operates within amino-acid biosynthesis; L-lysine biosynthesis via DAP pathway; (S)-tetrahydrodipicolinate from L-aspartate: step 3/4. Catalyzes the condensation of (S)-aspartate-beta-semialdehyde [(S)-ASA] and pyruvate to 4-hydroxy-tetrahydrodipicolinate (HTPA). This chain is 4-hydroxy-tetrahydrodipicolinate synthase, found in Oceanobacillus iheyensis (strain DSM 14371 / CIP 107618 / JCM 11309 / KCTC 3954 / HTE831).